We begin with the raw amino-acid sequence, 172 residues long: Translation initiation factor IF-3 (172 aa).

Belongs to the IF-3 family. Monomer.

The protein resides in the cytoplasm. IF-3 binds to the 30S ribosomal subunit and shifts the equilibrium between 70S ribosomes and their 50S and 30S subunits in favor of the free subunits, thus enhancing the availability of 30S subunits on which protein synthesis initiation begins. The sequence is that of Translation initiation factor IF-3 from Sulfurimonas denitrificans (strain ATCC 33889 / DSM 1251) (Thiomicrospira denitrificans (strain ATCC 33889 / DSM 1251)).